Here is a 313-residue protein sequence, read N- to C-terminus: Biotin synthase (313 aa).

The region spanning 28–258 is the Radical SAM core domain; sequence NFGNDIELCS…LFPQARLRLS (231 aa). [4Fe-4S] cluster-binding residues include C46, C50, and C53. [2Fe-2S] cluster is bound by residues C90, C121, C181, and R256.

It belongs to the radical SAM superfamily. Biotin synthase family. In terms of assembly, homodimer. [4Fe-4S] cluster serves as cofactor. It depends on [2Fe-2S] cluster as a cofactor.

It catalyses the reaction (4R,5S)-dethiobiotin + (sulfur carrier)-SH + 2 reduced [2Fe-2S]-[ferredoxin] + 2 S-adenosyl-L-methionine = (sulfur carrier)-H + biotin + 2 5'-deoxyadenosine + 2 L-methionine + 2 oxidized [2Fe-2S]-[ferredoxin]. It participates in cofactor biosynthesis; biotin biosynthesis; biotin from 7,8-diaminononanoate: step 2/2. Catalyzes the conversion of dethiobiotin (DTB) to biotin by the insertion of a sulfur atom into dethiobiotin via a radical-based mechanism. This Francisella philomiragia subsp. philomiragia (strain ATCC 25017 / CCUG 19701 / FSC 153 / O#319-036) protein is Biotin synthase.